The following is a 357-amino-acid chain: UDP-N-acetylglucosamine--N-acetylmuramyl-(pentapeptide) pyrophosphoryl-undecaprenol N-acetylglucosamine transferase (357 aa).

UDP-N-acetyl-alpha-D-glucosamine is bound by residues 15-17 (TGG), asparagine 124, arginine 165, serine 191, and glutamine 285.

Belongs to the glycosyltransferase 28 family. MurG subfamily.

The protein localises to the cell inner membrane. The catalysed reaction is di-trans,octa-cis-undecaprenyl diphospho-N-acetyl-alpha-D-muramoyl-L-alanyl-D-glutamyl-meso-2,6-diaminopimeloyl-D-alanyl-D-alanine + UDP-N-acetyl-alpha-D-glucosamine = di-trans,octa-cis-undecaprenyl diphospho-[N-acetyl-alpha-D-glucosaminyl-(1-&gt;4)]-N-acetyl-alpha-D-muramoyl-L-alanyl-D-glutamyl-meso-2,6-diaminopimeloyl-D-alanyl-D-alanine + UDP + H(+). The protein operates within cell wall biogenesis; peptidoglycan biosynthesis. Functionally, cell wall formation. Catalyzes the transfer of a GlcNAc subunit on undecaprenyl-pyrophosphoryl-MurNAc-pentapeptide (lipid intermediate I) to form undecaprenyl-pyrophosphoryl-MurNAc-(pentapeptide)GlcNAc (lipid intermediate II). This chain is UDP-N-acetylglucosamine--N-acetylmuramyl-(pentapeptide) pyrophosphoryl-undecaprenol N-acetylglucosamine transferase, found in Microcystis aeruginosa (strain NIES-843 / IAM M-2473).